We begin with the raw amino-acid sequence, 294 residues long: Cytidine deaminase (294 aa).

2 consecutive CMP/dCMP-type deaminase domains span residues 48–168 (DEDA…FGPK) and 186–294 (LTGD…VLLA). Residue 89 to 91 (NME) participates in substrate binding. Residue His-102 participates in Zn(2+) binding. Residue Glu-104 is the Proton donor of the active site. Cys-129 and Cys-132 together coordinate Zn(2+).

It belongs to the cytidine and deoxycytidylate deaminase family. In terms of assembly, homodimer. Zn(2+) serves as cofactor.

It carries out the reaction cytidine + H2O + H(+) = uridine + NH4(+). The enzyme catalyses 2'-deoxycytidine + H2O + H(+) = 2'-deoxyuridine + NH4(+). Its function is as follows. This enzyme scavenges exogenous and endogenous cytidine and 2'-deoxycytidine for UMP synthesis. This is Cytidine deaminase from Escherichia coli O157:H7.